The primary structure comprises 438 residues: MPENVTVIGAGLAGSEATWQLAKRGIHVDLYEMRPKKETPAHETGEFAELVCTNSMRSNQLSNAVGLLKEEMRHLDSLIMKAADMTQVPAGGALAVDRDSFSKYVTDTLKGMDNVTVHEEEIVKIPEDGITIIATGPLTSDALAKQIQAFSGTDSLHFFDAAAPIIAADSIDMDIVYKKSRYDRGEAAYLNCPMSKEQYEKFANELIKAETAQLHGFENSDVFEGCMPIEVMAARGAKTMLFGPLKPVGLEDPHTGETPYAVVQLRQDNAAASMYNIVGFQTHLKFGEQKRVFSMIPGLENARFVRYGKMHRNTYMASPNVLTASYEAKNRPGLFFAGQMTGVEGYVESAGSGLVAGINAAREALGKETVAFPKNTALGSMANYVTTTSAKHFQPMNASFALLPALEGKKIRKKRERHEKISERGLASLDAFKTEVLD.

An FAD-binding site is contributed by 9–14; that stretch reads GAGLAG.

This sequence belongs to the MnmG family. TrmFO subfamily. It depends on FAD as a cofactor.

It is found in the cytoplasm. The enzyme catalyses uridine(54) in tRNA + (6R)-5,10-methylene-5,6,7,8-tetrahydrofolate + NADH + H(+) = 5-methyluridine(54) in tRNA + (6S)-5,6,7,8-tetrahydrofolate + NAD(+). It carries out the reaction uridine(54) in tRNA + (6R)-5,10-methylene-5,6,7,8-tetrahydrofolate + NADPH + H(+) = 5-methyluridine(54) in tRNA + (6S)-5,6,7,8-tetrahydrofolate + NADP(+). In terms of biological role, catalyzes the folate-dependent formation of 5-methyl-uridine at position 54 (M-5-U54) in all tRNAs. This chain is Methylenetetrahydrofolate--tRNA-(uracil-5-)-methyltransferase TrmFO, found in Lactobacillus acidophilus (strain ATCC 700396 / NCK56 / N2 / NCFM).